A 145-amino-acid chain; its full sequence is uncharacterized protein (145 aa).

Positions 37-123 are disordered; the sequence is GKGTNTAKSS…MDREASYFAP (87 aa). Polar residues predominate over residues 38–63; that stretch reads KGTNTAKSSGGNNGTNLNAKRSNTTQ.

This is an uncharacterized protein from Caenorhabditis elegans.